The chain runs to 85 residues: UPF0335 protein Plav_2034 (85 aa).

The protein belongs to the UPF0335 family.

This chain is UPF0335 protein Plav_2034, found in Parvibaculum lavamentivorans (strain DS-1 / DSM 13023 / NCIMB 13966).